Here is a 385-residue protein sequence, read N- to C-terminus: 8-amino-7-oxononanoate synthase (385 aa).

Position 21 (R21) interacts with substrate. Pyridoxal 5'-phosphate is bound at residue 108–109 (GF). H133 lines the substrate pocket. Residues S179, H207, and T233 each coordinate pyridoxal 5'-phosphate. An N6-(pyridoxal phosphate)lysine modification is found at K236. Substrate is bound at residue T352.

This sequence belongs to the class-II pyridoxal-phosphate-dependent aminotransferase family. BioF subfamily. In terms of assembly, homodimer. Pyridoxal 5'-phosphate serves as cofactor.

The enzyme catalyses 6-carboxyhexanoyl-[ACP] + L-alanine + H(+) = (8S)-8-amino-7-oxononanoate + holo-[ACP] + CO2. Its pathway is cofactor biosynthesis; biotin biosynthesis. Functionally, catalyzes the decarboxylative condensation of pimeloyl-[acyl-carrier protein] and L-alanine to produce 8-amino-7-oxononanoate (AON), [acyl-carrier protein], and carbon dioxide. The polypeptide is 8-amino-7-oxononanoate synthase (Salmonella paratyphi C (strain RKS4594)).